Reading from the N-terminus, the 147-residue chain is Hemoglobin subunit beta (147 aa).

Valine 2 is modified (N-acetylvaline). The 145-residue stretch at 3-147 folds into the Globin domain; sequence HLTGEEKGIV…VATALAHKYH (145 aa). Phosphothreonine is present on threonine 13. Position 45 is a phosphoserine (serine 45). Lysine 60 is modified (N6-acetyllysine). A heme b-binding site is contributed by histidine 64. At lysine 83 the chain carries N6-acetyllysine. A heme b-binding site is contributed by histidine 93. S-nitrosocysteine is present on cysteine 94. Lysine 145 carries the N6-acetyllysine modification.

Belongs to the globin family. Heterotetramer of two alpha chains and two beta chains. As to expression, red blood cells.

Involved in oxygen transport from the lung to the various peripheral tissues. This Rhinolophus ferrumequinum (Greater horseshoe bat) protein is Hemoglobin subunit beta (HBB).